The sequence spans 406 residues: Tryptophan synthase beta chain (406 aa).

At lysine 99 the chain carries N6-(pyridoxal phosphate)lysine.

The protein belongs to the TrpB family. Tetramer of two alpha and two beta chains. The cofactor is pyridoxal 5'-phosphate.

It carries out the reaction (1S,2R)-1-C-(indol-3-yl)glycerol 3-phosphate + L-serine = D-glyceraldehyde 3-phosphate + L-tryptophan + H2O. Its pathway is amino-acid biosynthesis; L-tryptophan biosynthesis; L-tryptophan from chorismate: step 5/5. In terms of biological role, the beta subunit is responsible for the synthesis of L-tryptophan from indole and L-serine. The protein is Tryptophan synthase beta chain of Phenylobacterium zucineum (strain HLK1).